Reading from the N-terminus, the 159-residue chain is 4-deoxy-4-sulfo-D-erythrose isomerase (159 aa).

Cys-66 (proton acceptor) is an active-site residue.

The protein belongs to the LacAB/RpiB family.

It catalyses the reaction 4-deoxy-4-sulfo-D-erythrose = 4-deoxy-4-sulfo-D-erythrulose. Part of the sulfo-TK pathway, a D-sulfoquinovose degradation pathway that produces 2-hydroxyethane-1-sulfonate (isethionate). Catalyzes the isomerization of 4-deoxy-4-sulfo-D-erythrose (SE) to 4-deoxy-4-sulfo-D-erythrulose (SEu). The polypeptide is 4-deoxy-4-sulfo-D-erythrose isomerase (Clostridium sp. (strain MSTE9)).